The primary structure comprises 505 residues: RNA-splicing ligase RtcB homolog (505 aa).

Residues D119, C122, H227, H259, and H353 each contribute to the Mn(2+) site. 226 to 230 (NHYGE) is a GMP binding site. GMP is bound by residues 353 to 354 (HN), 402 to 405 (GGTM), S409, 428 to 431 (HGAG), and K504. The active-site GMP-histidine intermediate is H428.

The protein belongs to the RtcB family. Catalytic component of the tRNA-splicing ligase complex. It depends on Mn(2+) as a cofactor.

It carries out the reaction a 3'-end 3'-phospho-ribonucleotide-RNA + a 5'-end dephospho-ribonucleoside-RNA + GTP = a ribonucleotidyl-ribonucleotide-RNA + GMP + diphosphate. The catalysed reaction is a 3'-end 2',3'-cyclophospho-ribonucleotide-RNA + a 5'-end dephospho-ribonucleoside-RNA + GTP + H2O = a ribonucleotidyl-ribonucleotide-RNA + GMP + diphosphate + H(+). Catalytic subunit of the tRNA-splicing ligase complex that acts by directly joining spliced tRNA halves to mature-sized tRNAs by incorporating the precursor-derived splice junction phosphate into the mature tRNA as a canonical 3',5'-phosphodiester. May act as an RNA ligase with broad substrate specificity, and may function toward other RNAs. The sequence is that of RNA-splicing ligase RtcB homolog from Brugia malayi (Filarial nematode worm).